The sequence spans 311 residues: Aspartate carbamoyltransferase catalytic subunit (311 aa).

Carbamoyl phosphate-binding residues include Arg-58 and Thr-59. Lys-86 provides a ligand contact to L-aspartate. The carbamoyl phosphate site is built by Arg-108, His-136, and Gln-139. 2 residues coordinate L-aspartate: Arg-169 and Arg-224. Positions 265 and 266 each coordinate carbamoyl phosphate.

It belongs to the aspartate/ornithine carbamoyltransferase superfamily. ATCase family. Heterododecamer (2C3:3R2) of six catalytic PyrB chains organized as two trimers (C3), and six regulatory PyrI chains organized as three dimers (R2).

The catalysed reaction is carbamoyl phosphate + L-aspartate = N-carbamoyl-L-aspartate + phosphate + H(+). It participates in pyrimidine metabolism; UMP biosynthesis via de novo pathway; (S)-dihydroorotate from bicarbonate: step 2/3. In terms of biological role, catalyzes the condensation of carbamoyl phosphate and aspartate to form carbamoyl aspartate and inorganic phosphate, the committed step in the de novo pyrimidine nucleotide biosynthesis pathway. The polypeptide is Aspartate carbamoyltransferase catalytic subunit (Geotalea daltonii (strain DSM 22248 / JCM 15807 / FRC-32) (Geobacter daltonii)).